The sequence spans 370 residues: GDSL esterase/lipase At1g09390 (370 aa).

An N-terminal signal peptide occupies residues 1 to 27 (MATLSLHSHSFLLVLLPFILILRQNLA). Serine 44 serves as the catalytic Nucleophile. N-linked (GlcNAc...) asparagine glycosylation is found at asparagine 90 and asparagine 315. Active-site residues include aspartate 336 and histidine 339.

Belongs to the 'GDSL' lipolytic enzyme family.

The protein resides in the secreted. This chain is GDSL esterase/lipase At1g09390, found in Arabidopsis thaliana (Mouse-ear cress).